The sequence spans 316 residues: 4-hydroxy-3-methylbut-2-enyl diphosphate reductase (316 aa).

Cysteine 12 contacts [4Fe-4S] cluster. Positions 41 and 74 each coordinate (2E)-4-hydroxy-3-methylbut-2-enyl diphosphate. Dimethylallyl diphosphate is bound by residues histidine 41 and histidine 74. Residues histidine 41 and histidine 74 each contribute to the isopentenyl diphosphate site. Residue cysteine 96 participates in [4Fe-4S] cluster binding. (2E)-4-hydroxy-3-methylbut-2-enyl diphosphate is bound at residue histidine 124. Residue histidine 124 coordinates dimethylallyl diphosphate. Histidine 124 contacts isopentenyl diphosphate. Glutamate 126 acts as the Proton donor in catalysis. Threonine 167 contributes to the (2E)-4-hydroxy-3-methylbut-2-enyl diphosphate binding site. Cysteine 197 is a binding site for [4Fe-4S] cluster. (2E)-4-hydroxy-3-methylbut-2-enyl diphosphate is bound by residues serine 225, serine 226, asparagine 227, and serine 269. Dimethylallyl diphosphate is bound by residues serine 225, serine 226, asparagine 227, and serine 269. The isopentenyl diphosphate site is built by serine 225, serine 226, asparagine 227, and serine 269.

It belongs to the IspH family. Homodimer. Requires [4Fe-4S] cluster as cofactor.

The catalysed reaction is isopentenyl diphosphate + 2 oxidized [2Fe-2S]-[ferredoxin] + H2O = (2E)-4-hydroxy-3-methylbut-2-enyl diphosphate + 2 reduced [2Fe-2S]-[ferredoxin] + 2 H(+). It catalyses the reaction dimethylallyl diphosphate + 2 oxidized [2Fe-2S]-[ferredoxin] + H2O = (2E)-4-hydroxy-3-methylbut-2-enyl diphosphate + 2 reduced [2Fe-2S]-[ferredoxin] + 2 H(+). The protein operates within isoprenoid biosynthesis; dimethylallyl diphosphate biosynthesis; dimethylallyl diphosphate from (2E)-4-hydroxy-3-methylbutenyl diphosphate: step 1/1. Its pathway is isoprenoid biosynthesis; isopentenyl diphosphate biosynthesis via DXP pathway; isopentenyl diphosphate from 1-deoxy-D-xylulose 5-phosphate: step 6/6. In terms of biological role, catalyzes the conversion of 1-hydroxy-2-methyl-2-(E)-butenyl 4-diphosphate (HMBPP) into a mixture of isopentenyl diphosphate (IPP) and dimethylallyl diphosphate (DMAPP). Acts in the terminal step of the DOXP/MEP pathway for isoprenoid precursor biosynthesis. This chain is 4-hydroxy-3-methylbut-2-enyl diphosphate reductase, found in Pectobacterium atrosepticum (strain SCRI 1043 / ATCC BAA-672) (Erwinia carotovora subsp. atroseptica).